Consider the following 79-residue polypeptide: Cell division protein ZapB (79 aa).

Positions 4–78 (EVFEKLEAKV…LQALLGKMEE (75 aa)) form a coiled coil.

Belongs to the ZapB family. In terms of assembly, homodimer. The ends of the coiled-coil dimer bind to each other, forming polymers. Interacts with FtsZ.

Its subcellular location is the cytoplasm. Functionally, non-essential, abundant cell division factor that is required for proper Z-ring formation. It is recruited early to the divisome by direct interaction with FtsZ, stimulating Z-ring assembly and thereby promoting cell division earlier in the cell cycle. Its recruitment to the Z-ring requires functional FtsA or ZipA. The polypeptide is Cell division protein ZapB (Cronobacter sakazakii (strain ATCC BAA-894) (Enterobacter sakazakii)).